A 709-amino-acid polypeptide reads, in one-letter code: Leucine-rich repeat-containing protein 4B (709 aa).

The signal sequence occupies residues 1 to 38 (MAQAHIQGSPCPLLPPGRMSWPQGALLLLWLFSPPLRA). Residues 50 to 88 (GGGSPPATSCPAACSCSNQASRVICTRRELAEVPASIPV) form the LRRNT domain. 9 LRR repeats span residues 89–110 (NTRY…TFKH), 113–134 (HLEI…AFNG), 137–158 (SLNT…AFEY), 161–182 (KLRE…AFNR), 185–207 (SLRR…AFEG), 210–231 (NLRY…TALV), 232–253 (RLEE…SFQG), 256–277 (SLRK…AFDD), and 280–301 (SLEE…LFTP). The LRRCT domain occupies 313–365 (NPWHCNCDVLWLSWWLKETVPSNTTCCARCHAPAGLKGRYIGELDQSHFTCYA). The region spanning 366–454 (PVIVEPPTDL…GNTTASATLN (89 aa)) is the Ig-like C2-type domain. N-linked (GlcNAc...) asparagine glycans are attached at residues N376, N402, N424, N427, and N446. A disulfide bridge links C387 with C438. Residues 496–552 (TQPGEEAQQPRGTEKEPPGPTTDGAWGGGRPDAAAPASASTTAPAPRSSRPTEKAFT) form a disordered region. Residues 528–544 (AAAPASASTTAPAPRSS) are compositionally biased toward low complexity. The chain crosses the membrane as a helical span at residues 575 to 595 (IIIGCFVAITFMAAVMLVAFY). S689 bears the Phosphoserine mark.

In terms of assembly, interacts with PTPRF. Interacts with DLG4. In terms of processing, N-glycosylated. O-glycosylated; contains sialic acid. Mainly expressed in the brain. Widespread distribution in various brain regions (at protein level). Detected both embryonically and postnatally with stronger expression in postnatal stages.

It is found in the membrane. The protein resides in the presynaptic cell membrane. Functionally, synaptic adhesion protein. Regulates the formation of excitatory synapses. The trans-synaptic adhesion between LRRC4B and PTPRF regulates the formation of excitatory synapses in a bidirectional manner. The protein is Leucine-rich repeat-containing protein 4B (Lrrc4b) of Rattus norvegicus (Rat).